Consider the following 324-residue polypeptide: Serpentine receptor class gamma-10 (324 aa).

Helical transmembrane passes span 39–59 (SSYL…VFHG), 69–89 (MLYC…VIFG), 91–111 (IFIY…TPSI), 128–146 (TFSQ…IFLM), 155–175 (ILKP…WKIL), 206–226 (LFHF…TILG), 246–266 (MIMA…VFFA), and 279–299 (IVSF…IVMS).

The protein belongs to the nematode receptor-like protein srg family.

The protein localises to the membrane. In Caenorhabditis elegans, this protein is Serpentine receptor class gamma-10 (srg-10).